Consider the following 729-residue polypeptide: MSCCDLAAAGQLGKAGIMASDCEPALNQAESRNPTLERYLGALREAKNDSEQFAALLLVTKAVKAGDIDAKTRRRIFDAVGFTFPNRLLTTKEAPDGCPDHVLRALGVALLACFCSDPELASHPQVLNKIPILSTFLTARGDPDDAARRSMIDDTYQCLTAVAGTPRGPRHLIAGGTVSALCQAYLGHGYGFDQALALLVGLLAAAETQCWKEAEPDLLAVLRGLSEDFQRAEDASKFELCQLLPLFLPPTTVPPECHRDLQAGLARILGSKLSSWQRNPALKLAARLAHACGSDWIPVGSSGSKFLALLVNLACVEVRLALEETGTEVKEDVVTACYALMELGIQECTRCEQSLLKEPQKVQLVSIMKEAIGAVIHYLLQVGPEKQKEPFVFASVRILGAWLAEETSSLRKEVCQLLPFLVRYAKTLYEEAEEASDISQQVANLAISPTTPGPSWPGDALRLLLPGWCHLTVEDGPREILIKEGAPSLLCKYFLQQWELTSPGHDTSVLPDSVEIGLQTCCHIFLNLVVTAPGLIKRDACFTSLMNTLMTSLPSLVQQQGRLLLAANVATLGLLMARLLSTSPALQGTPASRGFFAAAILFLSQSHVARATPGSDQAVLALSPDYEGIWADLQELWFLGMQAFTGCVPLLPWLAPAALRSRWPQELLQLLGSVSPNSVKPEMVAAYQGVLVELARANRLCREAMRLQAGEETASHYRMAALEQCLSEP.

Ser-2 carries the N-acetylserine modification. Ser-2 carries the phosphoserine modification. S-palmitoyl cysteine attachment occurs at residues Cys-3 and Cys-4. Arg-75 carries the asymmetric dimethylarginine modification. Ser-448 is subject to Phosphoserine.

The protein belongs to the neurochondrin family. As to quaternary structure, interacts with MCHR1. Interacts with SEMA4C. Interacts with DIAPH1 (via FH3 domain). Interacts with GRM5. Post-translationally, palmitoylated. Palmitoylation by ZDHHC1, ZDHHC3 and ZDHHC11 regulates the association of NCDN with endosome membranes. May also be palmitoylated by ZDHHC7. Expressed in the neuronal, chondral and bone tissues. Expressed in dendrites. Enriched in the brain in the surface layer I-IV. In brains, protein level increases in male but decreases in female with advancing age (at protein level). In adult brains, it is highly expressed in the forebrain and hindbrain. Highly expressed in the hippocampus, piriform cortex, septum, amygdaloid complex, medial geniculate nucleus, inferior colliculus, cerebellar nuclei and the nuclei of the Vth, VIIth, and XIIth cranial nerves. In bone tissues, it is expressed in osteoblasts and osteocytes.

The protein localises to the cytoplasm. Its subcellular location is the cytosol. It is found in the endosome membrane. It localises to the cell projection. The protein resides in the dendrite. The protein localises to the postsynapse. Functionally, probably involved in signal transduction, in the nervous system, via increasing cell surface localization of GRM5 and positively regulating its signaling. Required for the spatial learning process. Acts as a negative regulator of Ca(2+)-calmodulin-dependent protein kinase 2 (CaMK2) phosphorylation. May play a role in modulating melanin-concentrating hormone-mediated functions via its interaction with MCHR1 that interferes with G protein-coupled signal transduction. May be involved in bone metabolism. May also be involved in neurite outgrowth. The sequence is that of Neurochondrin (Ncdn) from Mus musculus (Mouse).